An 873-amino-acid polypeptide reads, in one-letter code: Bifunctional heparan sulfate N-deacetylase/N-sulfotransferase 3 (873 aa).

The Cytoplasmic segment spans residues 1–13 (MSFIMKLHRHFQR). Residues 14 to 34 (TVILLATFCMVSIIISAYYLY) traverse the membrane as a helical; Signal-anchor for type II membrane protein segment. At 35-873 (SGYKQENELS…WLRQELQKVR (839 aa)) the chain is on the lumenal side. Residues 36 to 589 (GYKQENELSE…KRHRDIWSKE (554 aa)) form a heparan sulfate N-deacetylase 3 region. 4 N-linked (GlcNAc...) asparagine glycosylation sites follow: Asn146, Asn226, Asn342, and Asn392. Residues 590 to 873 (KTCDRLPKFL…WLRQELQKVR (284 aa)) form a heparan sulfate N-sulfotransferase 3 region. The active-site For sulfotransferase activity is Lys605. 605-609 (KTGTT) is a 3'-phosphoadenylyl sulfate binding site. Asn658 carries N-linked (GlcNAc...) asparagine glycosylation. Residue Ser703 coordinates 3'-phosphoadenylyl sulfate. A glycan (N-linked (GlcNAc...) asparagine) is linked at Asn794. Residues Cys809 and Cys819 are joined by a disulfide bond. 824 to 828 (KGRKY) contributes to the 3'-phosphoadenylyl sulfate binding site.

The protein belongs to the sulfotransferase 1 family. NDST subfamily. In terms of assembly, monomer. In terms of tissue distribution, expressed in brain, kidney, liver, fetal and adult lung, adult pancreas, placenta, fetal spleen and fetal thymus. Not detected in adult/ fetal heart and skeletal muscle.

The protein localises to the golgi apparatus membrane. The catalysed reaction is alpha-D-glucosaminyl-[heparan sulfate](n) + 3'-phosphoadenylyl sulfate = N-sulfo-alpha-D-glucosaminyl-[heparan sulfate](n) + adenosine 3',5'-bisphosphate + 2 H(+). It functions in the pathway glycan metabolism; heparan sulfate biosynthesis. Its pathway is glycan metabolism; heparin biosynthesis. Essential bifunctional enzyme that catalyzes both the N-deacetylation and the N-sulfation of glucosamine (GlcNAc) of the glycosaminoglycan in heparan sulfate. Modifies the GlcNAc-GlcA disaccharide repeating sugar backbone to make N-sulfated heparosan, a prerequisite substrate for later modifications in heparin biosynthesis. Has high deacetylase activity but low sulfotransferase activity. The chain is Bifunctional heparan sulfate N-deacetylase/N-sulfotransferase 3 from Homo sapiens (Human).